A 255-amino-acid polypeptide reads, in one-letter code: tRNA pseudouridine synthase A (255 aa).

The active-site Nucleophile is Asp52. A substrate-binding site is contributed by Tyr111.

Belongs to the tRNA pseudouridine synthase TruA family. In terms of assembly, homodimer.

The catalysed reaction is uridine(38/39/40) in tRNA = pseudouridine(38/39/40) in tRNA. In terms of biological role, formation of pseudouridine at positions 38, 39 and 40 in the anticodon stem and loop of transfer RNAs. This is tRNA pseudouridine synthase A from Cereibacter sphaeroides (strain KD131 / KCTC 12085) (Rhodobacter sphaeroides).